We begin with the raw amino-acid sequence, 96 residues long: Dynein light chain roadblock-type 1 (96 aa).

Residue alanine 2 is modified to N-acetylalanine.

The protein belongs to the GAMAD family. Homodimer. The cytoplasmic dynein 1 complex consists of two catalytic heavy chains (HCs) and a number of non-catalytic subunits presented by intermediate chains (ICs), light intermediate chains (LICs) and light chains (LCs); the composition seems to vary in respect to the IC, LIC and LC composition. The heavy chain homodimer serves as a scaffold for the probable homodimeric assembly of the respective non-catalytic subunits. The ICs and LICs bind directly to the HC dimer and the LCs assemble on the IC dimer. Interacts with DYNLRB2. Interacts with DYNC1I1 and DYNC1I2. Interacts with RAB6A isoform 1 (GTP-bound); the interaction is direct. Interacts with RAB6A isoform 2 (GDP-bound); the interaction is direct. Interacts with RAB6B (GDP-bound). In terms of tissue distribution, high expression in heart, liver, brain and pancreas; moderate in placenta, skeletal muscle and kidney; low in lung, prostate, testis, small intestine and colon. Isoform 1 expression is up-regulated in 64% hepatocellular carcinoma (HCC) patients.

Its subcellular location is the cytoplasm. The protein localises to the cytoskeleton. In terms of biological role, acts as one of several non-catalytic accessory components of the cytoplasmic dynein 1 complex that are thought to be involved in linking dynein to cargos and to adapter proteins that regulate dynein function. Cytoplasmic dynein 1 acts as a motor for the intracellular retrograde motility of vesicles and organelles along microtubules. This is Dynein light chain roadblock-type 1 from Homo sapiens (Human).